The chain runs to 379 residues: Chaperone protein DnaJ (379 aa).

The region spanning 6 to 71 is the J domain; it reads DYYEVLGVDK…QKRSRYDQFG (66 aa). Residues 138–220 form a CR-type zinc finger; that stretch reads GVEREINVSK…CNGKGRLRST (83 aa). Zn(2+)-binding residues include Cys-151, Cys-154, Cys-168, Cys-171, Cys-194, Cys-197, Cys-208, and Cys-211. CXXCXGXG motif repeat units follow at residues 151-158, 168-175, 194-201, and 208-215; these read CSKCTGSG, CNHCNGTG, CDACKGEG, and CPACNGKG.

Belongs to the DnaJ family. In terms of assembly, homodimer. It depends on Zn(2+) as a cofactor.

Its subcellular location is the cytoplasm. Participates actively in the response to hyperosmotic and heat shock by preventing the aggregation of stress-denatured proteins and by disaggregating proteins, also in an autonomous, DnaK-independent fashion. Unfolded proteins bind initially to DnaJ; upon interaction with the DnaJ-bound protein, DnaK hydrolyzes its bound ATP, resulting in the formation of a stable complex. GrpE releases ADP from DnaK; ATP binding to DnaK triggers the release of the substrate protein, thus completing the reaction cycle. Several rounds of ATP-dependent interactions between DnaJ, DnaK and GrpE are required for fully efficient folding. Also involved, together with DnaK and GrpE, in the DNA replication of plasmids through activation of initiation proteins. The polypeptide is Chaperone protein DnaJ (Ruminiclostridium cellulolyticum (strain ATCC 35319 / DSM 5812 / JCM 6584 / H10) (Clostridium cellulolyticum)).